The primary structure comprises 1026 residues: Glutactin (1026 aa).

An N-terminal signal peptide occupies residues 1–17; that stretch reads MKPLLLVLALCGAQVHA. Sulfotyrosine is present on residues Y26 and Y29. Residue N115 is glycosylated (N-linked (GlcNAc...) asparagine). C123 and C145 form a disulfide bridge. A Sulfotyrosine modification is found at Y182. Residues C298 and C316 are joined by a disulfide bond. N-linked (GlcNAc...) asparagine glycosylation is found at N368 and N402. Position 559 is a sulfotyrosine (Y559). The interval 601–641 is disordered; that stretch reads PITTTTTTTTTTTTTSRPYAYNPYANWQNRPSQQHPNWHPA. Low complexity predominate over residues 603–615; sequence TTTTTTTTTTTTT. A compositionally biased stretch (polar residues) spans 625 to 636; the sequence is ANWQNRPSQQHP. Y645 bears the Sulfotyrosine mark. Disordered regions lie at residues 659-695 and 723-1026; these read EREQ…REQE and EREQ…NSRN. Positions 723 to 752 are enriched in basic and acidic residues; the sequence is EREQYEREQQEREQREREELERQQREREQQ. Y727 bears the Sulfotyrosine mark. N810 carries an N-linked (GlcNAc...) asparagine glycan. Basic and acidic residues predominate over residues 811 to 854; it reads FSEEDREQQQQEQLRREQQEQQEREYQLQLEREQQEREQQERGQ. 6 positions are modified to sulfotyrosine: Y836, Y862, Y865, Y868, Y922, and Y928. A compositionally biased stretch (low complexity) spans 855-866; that stretch reads QEPGPEEYPSYE. Residues 867-893 show a composition bias toward basic and acidic residues; the sequence is EYSRALQEKNAERDRIYAEEQERERQQ. The span at 923-944 shows a compositional bias: basic and acidic residues; sequence DGDRSYAEEQEREQQRRDQVEQ. Residues 945–969 are compositionally biased toward acidic residues; it reads EREEQPDEDQGEEYERSPDEEEAAE. A sulfotyrosine mark is found at Y981, Y984, and Y1006. A compositionally biased stretch (basic and acidic residues) spans 1002–1026; that stretch reads EEERYRAQQEEEDRIQAERERNSRN.

In the N-terminal section; belongs to the type-B carboxylesterase/lipase family. In terms of processing, extensively O-glycosylated and also N-glycosylated. Post-translationally, about four tyrosines are sulfated.

It is found in the secreted. It localises to the extracellular space. The protein localises to the extracellular matrix. The protein resides in the basement membrane. Its function is as follows. Not known. Binds calcium ions. The chain is Glutactin (Glt) from Drosophila melanogaster (Fruit fly).